The chain runs to 587 residues: Thioredoxin domain-containing protein 3 (587 aa).

The Thioredoxin domain maps to 2-119 (ASKKREVQLQ…VIALIDEEKK (118 aa)). An intrachain disulfide couples cysteine 39 to cysteine 42. NDK stretches follow at residues 157–255 (MAVI…PLEE), 313–453 (VQRT…STLA), and 454–587 (LIKP…NFEN).

It in the C-terminal section; belongs to the NDK family. Monomer. As to expression, testis-specific.

It is found in the cytoplasm. Its function is as follows. Probably required during the final stages of sperm tail maturation in the testis and/or epididymis, where extensive disulfide bonding of fibrous sheath (FS) proteins occurs. In vitro, it has neither nucleoside diphosphate kinase (NDPK) activity nor reducing activity on disulfide bonds. Exhibits a 3'-5' exonuclease activity with a preference for single-stranded DNA, suggesting roles in DNA proofreading and repair. In Rattus norvegicus (Rat), this protein is Thioredoxin domain-containing protein 3 (Nme8).